Reading from the N-terminus, the 127-residue chain is Large-conductance mechanosensitive channel (127 aa).

A run of 3 helical transmembrane segments spans residues 8-28 (FAFKGNVLDLAIGVIIGAAFG), 30-50 (IVTALVDVVIMPIISIILSLI), and 70-90 (IGVLIKTIIEFLIIAFVLFLF).

The protein belongs to the MscL family. Homopentamer.

The protein resides in the cell membrane. Channel that opens in response to stretch forces in the membrane lipid bilayer. May participate in the regulation of osmotic pressure changes within the cell. In Herpetosiphon aurantiacus (strain ATCC 23779 / DSM 785 / 114-95), this protein is Large-conductance mechanosensitive channel.